Consider the following 287-residue polypeptide: Merozoite surface protein 2 (287 aa).

The first 20 residues, 1–20 (MKVIKTLSIINFFIFVTFNI), serve as a signal peptide directing secretion. Asn-22 and Asn-36 each carry an N-linked (GlcNAc...) asparagine glycan. Residues 42-248 (SMTESNPPTG…DSQKECTDGN (207 aa)) form a disordered region. Positions 44 to 213 (TESNPPTGAS…EQTESPELQS (170 aa)) are polymorphic region. Residues 54 to 112 (GSAGGSAGGSAGGSAGGSAGGSAGGSAGGSAGGSAGGSAGGSAGGSAGGSAGSGDGNGA) are compositionally biased toward gly residues. Tandem repeats lie at residues 55–58 (SAGG), 59–62 (SAGG), 63–66 (SAGG), 67–70 (SAGG), 71–74 (SAGG), 75–78 (SAGG), 79–82 (SAGG), 83–86 (SAGG), 87–90 (SAGG), 91–94 (SAGG), 95–98 (SAGG), and 99–102 (SAGG). The segment at 55–102 (SAGGSAGGSAGGSAGGSAGGSAGGSAGGSAGGSAGGSAGGSAGGSAGG) is 12 X 4 AA tandem repeats of S-A-G-G. Residues 121–149 (SPSTPATTTTTTTTNDAEASTSTSSENPN) are compositionally biased toward low complexity. 2 stretches are compositionally biased toward polar residues: residues 150 to 180 (HNNAETNQANKETQNNSNVQQDSQTKSNVPP) and 187 to 215 (KSPTAQPEQAENSAPTAEQTESPELQSAP). The N-linked (GlcNAc...) asparagine glycan is linked to Asn-164. A glycan (N-linked (GlcNAc...) asparagine) is linked at Asn-236. An intrachain disulfide couples Cys-244 to Cys-252. N-linked (GlcNAc...) asparagine glycosylation is found at Asn-260 and Asn-261. Residue Asn-261 is the site of GPI-anchor amidated asparagine attachment. A propeptide spans 262-287 (SSNIASINKFVVLISATLVLSFAIFI) (removed in mature form).

Its subcellular location is the cell membrane. In terms of biological role, may play a role in the merozoite attachment to the erythrocyte. This Plasmodium falciparum (isolate FCR-3 / Gambia) protein is Merozoite surface protein 2.